The following is a 283-amino-acid chain: DNA repair protein RecO (283 aa).

Belongs to the RecO family.

In terms of biological role, involved in DNA repair and RecF pathway recombination. This is DNA repair protein RecO from Gloeothece citriformis (strain PCC 7424) (Cyanothece sp. (strain PCC 7424)).